The primary structure comprises 237 residues: Ribonuclease PH (237 aa).

Phosphate-binding positions include Arg-86 and 124-126; that span reads GTR.

Belongs to the RNase PH family. As to quaternary structure, homohexameric ring arranged as a trimer of dimers.

It catalyses the reaction tRNA(n+1) + phosphate = tRNA(n) + a ribonucleoside 5'-diphosphate. Its function is as follows. Phosphorolytic 3'-5' exoribonuclease that plays an important role in tRNA 3'-end maturation. Removes nucleotide residues following the 3'-CCA terminus of tRNAs; can also add nucleotides to the ends of RNA molecules by using nucleoside diphosphates as substrates, but this may not be physiologically important. Probably plays a role in initiation of 16S rRNA degradation (leading to ribosome degradation) during starvation. The protein is Ribonuclease PH of Rhodopseudomonas palustris (strain HaA2).